The sequence spans 118 residues: Large ribosomal subunit protein uL22 (118 aa).

It belongs to the universal ribosomal protein uL22 family. In terms of assembly, part of the 50S ribosomal subunit.

Its function is as follows. This protein binds specifically to 23S rRNA; its binding is stimulated by other ribosomal proteins, e.g. L4, L17, and L20. It is important during the early stages of 50S assembly. It makes multiple contacts with different domains of the 23S rRNA in the assembled 50S subunit and ribosome. The globular domain of the protein is located near the polypeptide exit tunnel on the outside of the subunit, while an extended beta-hairpin is found that lines the wall of the exit tunnel in the center of the 70S ribosome. The polypeptide is Large ribosomal subunit protein uL22 (Synechococcus sp. (strain RCC307)).